The following is a 215-amino-acid chain: Protein-L-isoaspartate O-methyltransferase (215 aa).

The active site involves Ser62.

This sequence belongs to the methyltransferase superfamily. L-isoaspartyl/D-aspartyl protein methyltransferase family.

The protein resides in the cytoplasm. The catalysed reaction is [protein]-L-isoaspartate + S-adenosyl-L-methionine = [protein]-L-isoaspartate alpha-methyl ester + S-adenosyl-L-homocysteine. In terms of biological role, catalyzes the methyl esterification of L-isoaspartyl residues in peptides and proteins that result from spontaneous decomposition of normal L-aspartyl and L-asparaginyl residues. It plays a role in the repair and/or degradation of damaged proteins. The chain is Protein-L-isoaspartate O-methyltransferase from Rhodopseudomonas palustris (strain BisA53).